Here is a 205-residue protein sequence, read N- to C-terminus: ATP synthase subunit b (205 aa).

The chain crosses the membrane as a helical span at residues 45–65 (LGMTATAWVSLAMVIVILLLL).

It belongs to the ATPase B chain family. As to quaternary structure, F-type ATPases have 2 components, F(1) - the catalytic core - and F(0) - the membrane proton channel. F(1) has five subunits: alpha(3), beta(3), gamma(1), delta(1), epsilon(1). F(0) has three main subunits: a(1), b(2) and c(10-14). The alpha and beta chains form an alternating ring which encloses part of the gamma chain. F(1) is attached to F(0) by a central stalk formed by the gamma and epsilon chains, while a peripheral stalk is formed by the delta and b chains.

It localises to the cell inner membrane. Its function is as follows. F(1)F(0) ATP synthase produces ATP from ADP in the presence of a proton or sodium gradient. F-type ATPases consist of two structural domains, F(1) containing the extramembraneous catalytic core and F(0) containing the membrane proton channel, linked together by a central stalk and a peripheral stalk. During catalysis, ATP synthesis in the catalytic domain of F(1) is coupled via a rotary mechanism of the central stalk subunits to proton translocation. Component of the F(0) channel, it forms part of the peripheral stalk, linking F(1) to F(0). This chain is ATP synthase subunit b, found in Rhizorhabdus wittichii (strain DSM 6014 / CCUG 31198 / JCM 15750 / NBRC 105917 / EY 4224 / RW1) (Sphingomonas wittichii).